Here is a 487-residue protein sequence, read N- to C-terminus: N-succinylglutamate 5-semialdehyde dehydrogenase (487 aa).

NAD(+) is bound at residue 221-226 (GSSRTG). Catalysis depends on residues E244 and C278.

Belongs to the aldehyde dehydrogenase family. AstD subfamily.

The enzyme catalyses N-succinyl-L-glutamate 5-semialdehyde + NAD(+) + H2O = N-succinyl-L-glutamate + NADH + 2 H(+). The protein operates within amino-acid degradation; L-arginine degradation via AST pathway; L-glutamate and succinate from L-arginine: step 4/5. In terms of biological role, catalyzes the NAD-dependent reduction of succinylglutamate semialdehyde into succinylglutamate. This Pseudomonas entomophila (strain L48) protein is N-succinylglutamate 5-semialdehyde dehydrogenase.